The following is a 568-amino-acid chain: MAELMAMGNDVVHVAVKSDVRESRSTLLWALRNLGAKKVCILHVYQPKTASPAARKLEELEAIMYETLHDYFDFCQQEGVNEDDIYISCIEMNDVKQGILELIHESKIKKLVMGAASDHHYSEKMFDLKSRKAKYVYQHAPSSCEVMFMCDGHLIYTKEANLEDCMGETESEAGQSKPKLYSSASPKCSAELVSAIVAYIDTRRDRDMLEPNASEDQSESDRNDQLYRQLKQALMEVEESKREAYEECVRRFKAENTAVEAIRSAREYEAMYNEEAKLRKEGKEALAKQRKMVEKTKQERDDALIIILNGRKLYNEELRRRVEAEEMLGKEKEEHERTKKEIEEVRAIVQDGTLYNEQLRHRKEMEESMKRQEEELEKTKKEKEEACMISKNLMQLYEDEVRQRKEAEELVKRRREELEKVKKEKEEACSVGQNFMRLYEEEARRRKGTEEELSKVAAEKDAASSVCSEILLLLQSYTRRHGTPSGFSDEDSVTRQPPSYFICPISQEVMREPRVAADGFTYEAESLREWLDNGHETSPMTNLKLAHNNLVPNHALRSAIQEWLQRNS.

The stretch at Gln217–Ser464 forms a coiled coil. Residues Gln496–Ser568 enclose the U-box domain.

The catalysed reaction is S-ubiquitinyl-[E2 ubiquitin-conjugating enzyme]-L-cysteine + [acceptor protein]-L-lysine = [E2 ubiquitin-conjugating enzyme]-L-cysteine + N(6)-ubiquitinyl-[acceptor protein]-L-lysine.. It participates in protein modification; protein ubiquitination. In terms of biological role, functions as an E3 ubiquitin ligase. The sequence is that of Putative U-box domain-containing protein 55 (PUB55) from Arabidopsis thaliana (Mouse-ear cress).